The primary structure comprises 207 residues: Succinyl-CoA:3-ketoacid coenzyme A transferase subunit B (207 aa).

E43 is a catalytic residue.

It belongs to the 3-oxoacid CoA-transferase subunit B family. In terms of assembly, heterodimer of a subunit A and a subunit B.

The catalysed reaction is a 3-oxo acid + succinyl-CoA = a 3-oxoacyl-CoA + succinate. The chain is Succinyl-CoA:3-ketoacid coenzyme A transferase subunit B (scoB) from Helicobacter pylori (strain J99 / ATCC 700824) (Campylobacter pylori J99).